A 163-amino-acid polypeptide reads, in one-letter code: Protein-export protein SecB (163 aa).

Belongs to the SecB family. As to quaternary structure, homotetramer, a dimer of dimers. One homotetramer interacts with 1 SecA dimer.

The protein resides in the cytoplasm. Functionally, one of the proteins required for the normal export of preproteins out of the cell cytoplasm. It is a molecular chaperone that binds to a subset of precursor proteins, maintaining them in a translocation-competent state. It also specifically binds to its receptor SecA. The polypeptide is Protein-export protein SecB (Burkholderia ambifaria (strain MC40-6)).